Reading from the N-terminus, the 353-residue chain is Phospho-N-acetylmuramoyl-pentapeptide-transferase (353 aa).

Transmembrane regions (helical) follow at residues 24-44 (LGFF…ILWA), 66-86 (TPTM…VLCA), 88-108 (LGNL…FVGF), 129-149 (FGML…KGLD), 160-180 (PLFE…FLST), 192-212 (GLAS…VYVA), 229-249 (VGEL…FLWY), 256-276 (VFMG…NAIV), 281-301 (ILLV…ILQV), and 330-350 (KVIV…LLSL).

Belongs to the glycosyltransferase 4 family. MraY subfamily. Requires Mg(2+) as cofactor.

Its subcellular location is the cell inner membrane. It carries out the reaction UDP-N-acetyl-alpha-D-muramoyl-L-alanyl-gamma-D-glutamyl-meso-2,6-diaminopimeloyl-D-alanyl-D-alanine + di-trans,octa-cis-undecaprenyl phosphate = di-trans,octa-cis-undecaprenyl diphospho-N-acetyl-alpha-D-muramoyl-L-alanyl-D-glutamyl-meso-2,6-diaminopimeloyl-D-alanyl-D-alanine + UMP. It functions in the pathway cell wall biogenesis; peptidoglycan biosynthesis. Catalyzes the initial step of the lipid cycle reactions in the biosynthesis of the cell wall peptidoglycan: transfers peptidoglycan precursor phospho-MurNAc-pentapeptide from UDP-MurNAc-pentapeptide onto the lipid carrier undecaprenyl phosphate, yielding undecaprenyl-pyrophosphoryl-MurNAc-pentapeptide, known as lipid I. This is Phospho-N-acetylmuramoyl-pentapeptide-transferase from Helicobacter pylori (strain ATCC 700392 / 26695) (Campylobacter pylori).